The chain runs to 234 residues: 2-C-methyl-D-erythritol 4-phosphate cytidylyltransferase (234 aa).

The protein belongs to the IspD/TarI cytidylyltransferase family. IspD subfamily.

It carries out the reaction 2-C-methyl-D-erythritol 4-phosphate + CTP + H(+) = 4-CDP-2-C-methyl-D-erythritol + diphosphate. It participates in isoprenoid biosynthesis; isopentenyl diphosphate biosynthesis via DXP pathway; isopentenyl diphosphate from 1-deoxy-D-xylulose 5-phosphate: step 2/6. Functionally, catalyzes the formation of 4-diphosphocytidyl-2-C-methyl-D-erythritol from CTP and 2-C-methyl-D-erythritol 4-phosphate (MEP). The polypeptide is 2-C-methyl-D-erythritol 4-phosphate cytidylyltransferase (Pseudomonas paraeruginosa (strain DSM 24068 / PA7) (Pseudomonas aeruginosa (strain PA7))).